The chain runs to 256 residues: Large ribosomal subunit protein bL21c (256 aa).

Residues 1 to 55 (MASATLAFSCSSLCATLKLPQNLNPLLLNVPPLSKPFSGVVSPPSLSRLSLLPVA) constitute a chloroplast transit peptide.

As to quaternary structure, component of the chloroplast large ribosomal subunit (LSU). Mature 70S chloroplast ribosomes of higher plants consist of a small (30S) and a large (50S) subunit. The 30S small subunit contains 1 molecule of ribosomal RNA (16S rRNA) and 24 different proteins. The 50S large subunit contains 3 rRNA molecules (23S, 5S and 4.5S rRNA) and 33 different proteins.

It localises to the plastid. The protein localises to the chloroplast. Functionally, component of the chloroplast ribosome (chloro-ribosome), a dedicated translation machinery responsible for the synthesis of chloroplast genome-encoded proteins, including proteins of the transcription and translation machinery and components of the photosynthetic apparatus. This is Large ribosomal subunit protein bL21c (RPL21) from Spinacia oleracea (Spinach).